We begin with the raw amino-acid sequence, 199 residues long: 5'-deoxynucleotidase YfbR (199 aa).

Residues 18-19 and His33 each bind substrate; that span reads RW. In terms of domain architecture, HD spans 30 to 142; the sequence is VSEHSLQVAM…VKQADALCAY (113 aa). Residues His33, His68, and Asp69 each coordinate a divalent metal cation. Substrate is bound by residues Asp69, 77–80, and Asp137; that span reads DLPT. Position 137 (Asp137) interacts with a divalent metal cation.

The protein belongs to the 5DNU family. As to quaternary structure, homodimer. A divalent metal cation serves as cofactor.

It localises to the cytoplasm. It carries out the reaction a 2'-deoxyribonucleoside 5'-phosphate + H2O = a 2'-deoxyribonucleoside + phosphate. Its function is as follows. Catalyzes the strictly specific dephosphorylation of 2'-deoxyribonucleoside 5'-monophosphates. This chain is 5'-deoxynucleotidase YfbR, found in Shigella flexneri serotype 5b (strain 8401).